Reading from the N-terminus, the 242-residue chain is Type III pantothenate kinase (242 aa).

6–13 provides a ligand contact to ATP; it reads DIGNSVAK. Substrate contacts are provided by residues Tyr-86 and 93–96; that span reads GMDR. Asp-95 (proton acceptor) is an active-site residue. Asp-116 contributes to the K(+) binding site. Residue Thr-119 participates in ATP binding. Thr-171 is a substrate binding site.

It belongs to the type III pantothenate kinase family. In terms of assembly, homodimer. It depends on NH4(+) as a cofactor. Requires K(+) as cofactor.

The protein resides in the cytoplasm. The enzyme catalyses (R)-pantothenate + ATP = (R)-4'-phosphopantothenate + ADP + H(+). It participates in cofactor biosynthesis; coenzyme A biosynthesis; CoA from (R)-pantothenate: step 1/5. Its function is as follows. Catalyzes the phosphorylation of pantothenate (Pan), the first step in CoA biosynthesis. The polypeptide is Type III pantothenate kinase (Phocaeicola vulgatus (strain ATCC 8482 / DSM 1447 / JCM 5826 / CCUG 4940 / NBRC 14291 / NCTC 11154) (Bacteroides vulgatus)).